Reading from the N-terminus, the 471-residue chain is Tryptophanase (471 aa).

An N6-acetyllysine mark is found at Lys5, Lys115, and Lys156. Lys270 is subject to N6-(pyridoxal phosphate)lysine. Lys450 is subject to N6-acetyllysine.

It belongs to the beta-eliminating lyase family. In terms of assembly, homotetramer. Pyridoxal 5'-phosphate is required as a cofactor.

The enzyme catalyses L-tryptophan + H2O = indole + pyruvate + NH4(+). Its pathway is amino-acid degradation; L-tryptophan degradation via pyruvate pathway; indole and pyruvate from L-tryptophan: step 1/1. This chain is Tryptophanase, found in Escherichia fergusonii (strain ATCC 35469 / DSM 13698 / CCUG 18766 / IAM 14443 / JCM 21226 / LMG 7866 / NBRC 102419 / NCTC 12128 / CDC 0568-73).